Reading from the N-terminus, the 254-residue chain is Myeloblastin (254 aa).

Positions 1–27 are cleaved as a signal peptide; sequence MSGSYPSPKGIHPFLLLALVVGGAVQA. Positions 28–29 are excised as a propeptide; the sequence is SK. The Peptidase S1 domain maps to 30 to 250; it reads IVGGHEARPH…YVDWIQNVLR (221 aa). A disulfide bond links Cys58 and Cys74. Active-site charge relay system residues include His73 and Asp120. N-linked (GlcNAc...) asparagine glycosylation is found at Asn127 and Asn176. 3 disulfides stabilise this stretch: Cys154-Cys211, Cys184-Cys190, and Cys201-Cys226. The active-site Charge relay system is Ser205. Residues 251 to 254 constitute a propeptide that is removed on maturation; sequence GAEP.

This sequence belongs to the peptidase S1 family. Elastase subfamily. As to quaternary structure, may form dimers. Interacts with CD177; the interaction tethers PRTN3 to the cell surface; the interaction is direct. Interacts with SERPINB1. Interacts with ADGRG3.

It is found in the lysosome. The protein resides in the secreted. The protein localises to the cell membrane. It localises to the membrane raft. It catalyses the reaction Hydrolysis of proteins, including elastin, by preferential cleavage: -Ala-|-Xaa- &gt; -Val-|-Xaa-.. Serine protease that degrades elastin, fibronectin, laminin, vitronectin, and collagen types I, III, and IV (in vitro). By cleaving and activating receptor F2RL1/PAR-2, enhances endothelial cell barrier function and thus vascular integrity during neutrophil transendothelial migration. May play a role in neutrophil transendothelial migration, probably when associated with CD177. Triggers inflammatory processes in neutrophils by interacting with ADGRG3 upstream of F2RL1/PAR2 activation. The sequence is that of Myeloblastin (Prtn3) from Mus musculus (Mouse).